Here is a 394-residue protein sequence, read N- to C-terminus: MTKPNHELSPALIVLMSIATGLAVASNYYAQPLLDTIARNFSLSASSAGFIVTAAQLGYAAGLLFLVPLGDMFERRRLIVSMTLLAAGGMLITASSQSLAMMILGTALTGLFSVVAQILVPLAATLASPDKRGKVVGTIMSGLLLGILLARTVAGLLANLGGWRTVFWVASVLMALMALALWRGLPQMKSETHLNYPQLLGSVFSMFISNKILRTRALLGCLTFANFSILWTSMAFLLAAPPFNYSDGVIGLFGLAGAAGALGARPAGGFADKGKSHHTTTFGLLLLLLSWLAIWFGHTSVLALIIGILVLDLTVQGVHITNQTVIYRIHPDARNRLTAGYMTSYFIGGAAGSLISASAWQHGGWAGVCLAGATIALVNLLVWWRGFHRQEAAN.

A run of 11 helical transmembrane segments spans residues 10–30 (PALI…NYYA), 50–70 (FIVT…VPLG), 79–99 (IVSM…SQSL), 100–120 (AMMI…QILV), 138–158 (TIMS…GLLA), 166–186 (VFWV…RGLP), 218–238 (LLGC…AFLL), 243–263 (FNYS…GALG), 291–311 (WLAI…ILVL), 337–357 (LTAG…LISA), and 364–384 (GWAG…LVWW).

This sequence belongs to the major facilitator superfamily.

The protein localises to the cell inner membrane. This is an uncharacterized protein from Escherichia coli O157:H7.